The sequence spans 122 residues: Biogenesis of lysosome-related organelles complex 1 subunit CNL1 (122 aa).

Positions 1-10 (MQDNSSHSRE) are enriched in basic and acidic residues. The segment at 1–21 (MQDNSSHSRESASAGDDPLGI) is disordered. Residues 63 to 95 (ENTIDKNIAKFKELLEKCDTLENHYEMLNQLAI) adopt a coiled-coil conformation.

Belongs to the BLOC1S4 family. As to quaternary structure, component of the biogenesis of lysosome-related organelles complex-1 (BLOC-1) composed of at least BLI1, BLS1, CNL1, KXD1, SNN1 and VAB2.

The protein resides in the cytoplasm. In terms of biological role, component of the biogenesis of lysosome-related organelles complex-1 (BLOC-1), a complex that is involved in endosomal cargo sorting. This Saccharomyces cerevisiae (strain Lalvin QA23) (Baker's yeast) protein is Biogenesis of lysosome-related organelles complex 1 subunit CNL1 (CLN1).